Reading from the N-terminus, the 214-residue chain is Large ribosomal subunit protein uL3 (214 aa).

The tract at residues Thr136–Gly156 is disordered. N5-methylglutamine is present on Gln153.

Belongs to the universal ribosomal protein uL3 family. Part of the 50S ribosomal subunit. Forms a cluster with proteins L14 and L19. Methylated by PrmB.

Its function is as follows. One of the primary rRNA binding proteins, it binds directly near the 3'-end of the 23S rRNA, where it nucleates assembly of the 50S subunit. This is Large ribosomal subunit protein uL3 from Thioalkalivibrio sulfidiphilus (strain HL-EbGR7).